The sequence spans 109 residues: Transmembrane protein 233 (109 aa).

The interval 1 to 30 (MSQYAPSPDFKRALDSSPEANTEDDKTEED) is disordered. The Cytoplasmic segment spans residues 1 to 41 (MSQYAPSPDFKRALDSSPEANTEDDKTEEDVPMPKNYLWLT). The segment covering 21-30 (NTEDDKTEED) has biased composition (acidic residues). The helical intramembrane region spans 42 to 62 (IVSCFCPAYPINIVALVFSIM). Over 63–84 (SLNSYNDGDYEGARRLGRNAKW) the chain is Cytoplasmic. A helical transmembrane segment spans residues 85–105 (VAIASIIIGLLIIGISCAVHF). At 106–109 (TRNA) the chain is on the extracellular side.

The protein belongs to the CD225/Dispanin family. Interacts with the giant stinging tree toxin ExTxA (AC P0DQP3). Interacts with Nav1.7/SCN9A. Interacts with Nav1.1/SCN1A, Nav1.2/SCN2A, Nav1.3/SCN3A, Nav1.4/SCN4A, Nav1.5/SCN5A, and Nav1.6/SCN8A.

It localises to the cell membrane. Functionally, probable accessory protein of voltage-gated sodium channels. This Homo sapiens (Human) protein is Transmembrane protein 233.